A 102-amino-acid chain; its full sequence is Amoebiasin-1 (102 aa).

The short motif at Asn-27 to Tyr-32 is the BC loop element. A DE loop motif is present at residues Asp-51–Gly-61. Positions Pro-85 to Arg-93 match the FG loop motif.

It belongs to the protease inhibitor I42 family. Monomer. During oxidative conditions, forms homooligomers; disulfide-linked. Interacts with cysteine protease CP2. Interacts with cysteine protease CP5. Post-translationally, during oxidative conditions, cys-39, cys-58 and cys-60 react to form intra- and inter-molecular disulfide bonds resulting in the loss of the protein inhibitory activity.

It is found in the cytoplasm. In terms of biological role, cysteine protease inhibitor. Inhibits cysteine proteases CP1, CP2 and CP5. May protect the cytosol against cysteine proteases released by damaged intracellular vesicles. In Entamoeba histolytica (strain ATCC 30459 / HM-1:IMSS / ABRM), this protein is Amoebiasin-1.